The sequence spans 1389 residues: CRISPR-associated endoribonuclease Cas13a (1389 aa).

The interval methionine 1–arginine 347 is NTD. Arginine 219 provides a ligand contact to crRNA. 3 binds crRNA regions span residues tyrosine 330–lysine 342, lysine 405–tyrosine 408, and tyrosine 432–lysine 436. Residues glutamate 348 to threonine 498 are helical-1. Active-site for pre-crRNA processing residues include arginine 438 and lysine 441. Lysine 441 is a crRNA binding site. Residues lysine 471 to arginine 475 are binds crRNA. Lysine 489 is a crRNA binding site. Positions threonine 499 to lysine 636 are HEPN-like fold 1-I. The interval threonine 502–histidine 509 is binds crRNA. Residues arginine 597 and histidine 602 each act as for target ssRNA cleavage in the active site. Residues alanine 637–lysine 828 form a helical-2 region. Residue glutamine 759 coordinates crRNA. Residues threonine 829–asparagine 899 form an HEPN-like fold 1-II region. A binds crRNA region spans residues asparagine 853 to arginine 858. Residue tryptophan 865 participates in crRNA binding. Coiled-coil stretches lie at residues threonine 893–glutamine 920, glutamate 968–isoleucine 1046, and lysine 1101–lysine 1131. The tract at residues leucine 900–glutamate 1170 is linker. Positions glutamate 1170–proline 1290 are HEPN-like fold 2. Catalysis depends on for target ssRNA cleavage residues arginine 1278 and histidine 1283. Binds crRNA regions lie at residues threonine 1311–serine 1316 and lysine 1338–lysine 1339.

It belongs to the CRISPR-associated endoribonuclease Cas13a family. As to quaternary structure, monomer. Mg(2+) is required as a cofactor.

With respect to regulation, RNase activity on target is decreased by EDTA. Target RNA acts as an activator for non-specific ssRNA degradation. In terms of biological role, CRISPR (clustered regularly interspaced short palindromic repeat), is an adaptive immune system that provides protection against mobile genetic elements (viruses, transposable elements and conjugative plasmids). CRISPR clusters contain sequences complementary to antecedent mobile elements (spacers) and target invading nucleic acids. Unlike many single-component effectors, this CRISPR-Cas system targets RNA. CRISPR clusters are transcribed from pre-CRISPR RNA (crRNA) and processed into crRNA (optimally 28 nucleotides in this system) by this protein. This protein processes pre-crRNA at a 'non-typical' site 1 nucleotide upstream of the pre-crRNA stem-loop; it cleaves pre-crRNA from L.buccalis and L.wadei in a similar fashion, whereas the enzymes from the latter 2 bacteria cleave their own pre-crRNA 3 nt further upstream. When the appropriate target sequences are cloned into the CRISPR array, confers immunity to ssRNA(+) enterobacteria phage MS2. Cleaves linear target ssRNA in a crRNA-dependent fashion, preferentially before U residues; has no activity on partially dsRNA, ssDNA or dsDNA. RNA secondary structure surrounding the target influence the cleavage site and efficiency; unlike other CRISPR-Cas effectors Cas13a cleaves outside of the crRNA binding site. In the presence of a viable RNA target other RNAs are also degraded (called collateral RNA degradation), suggesting this type of CRISPR-Cas might also prevent viral spread by inducing programmed cell death or dormancy. This system has a 3' protospacer flanking site (PFS), it does not cleave when the 3' PFS is G (PFS is equivalent to PAM, the protospacer adjacent motif). Mutations of its active site residues results in an RNA-programmed RNA-binding protein. This Leptotrichia shahii (strain DSM 19757 / CCUG 47503 / CIP 107916 / JCM 16776 / LB37) protein is CRISPR-associated endoribonuclease Cas13a.